Reading from the N-terminus, the 274-residue chain is Large ribosomal subunit protein uL2 (274 aa).

Positions 224–256 (AMNPIDHPHGGGEGRTGEGRHAVDPWGNLTKGY) are disordered. Residues 229 to 246 (DHPHGGGEGRTGEGRHAV) are compositionally biased toward basic and acidic residues.

It belongs to the universal ribosomal protein uL2 family. Part of the 50S ribosomal subunit. Forms a bridge to the 30S subunit in the 70S ribosome.

Functionally, one of the primary rRNA binding proteins. Required for association of the 30S and 50S subunits to form the 70S ribosome, for tRNA binding and peptide bond formation. It has been suggested to have peptidyltransferase activity; this is somewhat controversial. Makes several contacts with the 16S rRNA in the 70S ribosome. This Acidovorax sp. (strain JS42) protein is Large ribosomal subunit protein uL2.